An 87-amino-acid polypeptide reads, in one-letter code: uncharacterized protein (87 aa).

The first 23 residues, 1 to 23 (MAVSVLRLTVVLGLLVLFLTCYA), serve as a signal peptide directing secretion. Residues 24–44 (DDKPDKPDDKPDDSGKDPKPD) form a disordered region.

It is found in the secreted. This is an uncharacterized protein from Homo sapiens (Human).